A 263-amino-acid polypeptide reads, in one-letter code: MPLPVALQTRLAKRGILKHLEPEPEEEIIAEDYDDDPVDYEATRIEGLPPSWYKVFDPSCGLPYYWNVETDLVSWLSPHDPNFVVSKSAKKLRNSNADAEDKSERNLEKVDRNHEKSDRSHEKPDRSHEKADRNHEKSDRERERNYDKVDRERDRDRERERAFDKADREDGKDRRHHRREELAPYPKNKKATSRKDEELDPMDPSSYSDAPRGTWSTGLPKRNEAKTGADTTAAGPLFQQRPYPSPGAVLRANAEASRSKQQD.

In terms of domain architecture, WW spans 46-80 (EGLPPSWYKVFDPSCGLPYYWNVETDLVSWLSPHD). Residues 94-263 (NSNADAEDKS…AEASRSKQQD (170 aa)) are disordered. The segment covering 99–173 (AEDKSERNLE…DKADREDGKD (75 aa)) has biased composition (basic and acidic residues). The 1-1; approximate repeat unit spans residues 104–110 (ERNLEKV). Positions 104-138 (ERNLEKVDRNHEKSDRSHEKPDRSHEKADRNHEKS) are 5 X 7 AA approximate tandem repeats of D-R-[NS]-H-E-K-S. One copy of the 1-2 repeat lies at 111-117 (DRNHEKS). Residues 118-124 (DRSHEKP) form a 1-3; approximate repeat. A 1-4; approximate repeat occupies 125–131 (DRSHEKA). 10 tandem repeats follow at residues 132–138 (DRNHEKS), 139–140 (DR), 141–142 (ER), 143–144 (ER), 150–151 (DR), 152–153 (ER), 154–155 (DR), 156–157 (DR), 158–159 (ER), and 160–161 (ER). The tract at residues 139–144 (DRERER) is 3 X 2 AA tandem repeats of [DE]-R. A 6 X 2 AA tandem repeats of [DE]-R region spans residues 150 to 161 (DRERDRDRERER). The interval 243 to 253 (YPSPGAVLRAN) is important for interaction with TXNL4A. Ser245 carries the post-translational modification Phosphoserine.

As to quaternary structure, interacts with POU3F2/Brn-2, ATXN1, TXNL4A, HTT and AR. Interaction with ATXN1 correlates positively with the length of the polyglutamine tract. Interacts with RNA polymerase II large subunit in a phosphorylation-dependent manner. Forms a ternary complex with ATXN1 mutant and phosphorylated RNA polymerase II. Interacts (via C-terminus) with TXNL4A and CD2BP2. Interacts (via WW domain) with ATN1 and SF3B1, and may interact with additional splice factors. Interacts (via WW domain) with WBP11; Leading to reduce interaction between PQBP1 and TXNL4A. Interacts with CAPRIN1. Interacts with DDX1. Interacts with SFPQ. Interacts with KHSRP.

The protein localises to the nucleus. It is found in the nucleus speckle. Its subcellular location is the cytoplasmic granule. Its function is as follows. Intrinsically disordered protein that acts as a scaffold, and which is involved in different processes, such as pre-mRNA splicing, transcription regulation, innate immunity and neuron development. Interacts with splicing-related factors via the intrinsically disordered region and regulates alternative splicing of target pre-mRNA species. May suppress the ability of POU3F2 to transactivate the DRD1 gene in a POU3F2 dependent manner. Can activate transcription directly or via association with the transcription machinery. May be involved in ATXN1 mutant-induced cell death. The interaction with ATXN1 mutant reduces levels of phosphorylated RNA polymerase II large subunit. Involved in the assembly of cytoplasmic stress granule, possibly by participating in the transport of neuronal RNA granules. Also acts as an innate immune sensor of infection by retroviruses, by detecting the presence of reverse-transcribed DNA in the cytosol. Directly binds retroviral reverse-transcribed DNA in the cytosol and interacts with CGAS, leading to activate the cGAS-STING signaling pathway, triggering type-I interferon production. The protein is Polyglutamine-binding protein 1 (Pqbp1) of Rattus norvegicus (Rat).